The following is a 29-amino-acid chain: Cyclotide mech-7 (29 aa).

Residues G1–D29 constitute a cross-link (cyclopeptide (Gly-Asp)). Disulfide bonds link C5–C19, C9–C21, and C14–C26.

Post-translationally, this is a cyclic peptide. Contains 3 disulfide bonds.

In terms of biological role, probably participates in a plant defense mechanism (Potential). Binds to and induces leakage in phospholipd membranes, particularly ones containing 1-palmitoyl-2-oleophosphatidylethanolamine (POPE). In Melicytus chathamicus (Chatham Island mahoe), this protein is Cyclotide mech-7.